The following is a 103-amino-acid chain: Small ribosomal subunit protein uS10 (103 aa).

It belongs to the universal ribosomal protein uS10 family. In terms of assembly, part of the 30S ribosomal subunit.

In terms of biological role, involved in the binding of tRNA to the ribosomes. This Wigglesworthia glossinidia brevipalpis protein is Small ribosomal subunit protein uS10.